Here is a 107-residue protein sequence, read N- to C-terminus: NADH dehydrogenase [ubiquinone] 1 beta subcomplex subunit 10-A (107 aa).

Positions methionine 1–proline 23 are disordered.

Belongs to the complex I NDUFB10 subunit family. Complex I is composed of at least 49 different subunits.

Its subcellular location is the mitochondrion inner membrane. Functionally, accessory subunit of the mitochondrial membrane respiratory chain NADH dehydrogenase (Complex I), that is believed not to be involved in catalysis. Complex I functions in the transfer of electrons from NADH to the respiratory chain. The immediate electron acceptor for the enzyme is believed to be ubiquinone. This Arabidopsis thaliana (Mouse-ear cress) protein is NADH dehydrogenase [ubiquinone] 1 beta subcomplex subunit 10-A.